Consider the following 251-residue polypeptide: Ribosomal RNA small subunit methyltransferase J (251 aa).

S-adenosyl-L-methionine is bound by residues 100 to 101, 116 to 117, and Asp170; these read RD and ER.

This sequence belongs to the methyltransferase superfamily. RsmJ family.

It localises to the cytoplasm. It catalyses the reaction guanosine(1516) in 16S rRNA + S-adenosyl-L-methionine = N(2)-methylguanosine(1516) in 16S rRNA + S-adenosyl-L-homocysteine + H(+). Specifically methylates the guanosine in position 1516 of 16S rRNA. This chain is Ribosomal RNA small subunit methyltransferase J, found in Actinobacillus pleuropneumoniae serotype 5b (strain L20).